Reading from the N-terminus, the 284-residue chain is MEMO1 family protein YN1551_0739 (284 aa).

The protein belongs to the MEMO1 family.

This chain is MEMO1 family protein YN1551_0739, found in Saccharolobus islandicus (strain Y.N.15.51 / Yellowstone #2) (Sulfolobus islandicus).